The sequence spans 299 residues: Non-structural protein NS-S (299 aa).

The involved in inclusion bodies formation stretch occupies residues 66–69; sequence PNNP. The interval 148-220 is interaction with host TNIP2; it reads FEGDMVIDSC…KPLLDSLYFA (73 aa).

This sequence belongs to the Bandavirus NS-S protein family. Interacts with host TBK1; this interaction antagonizes TBK1 phosphorylation and inhibits TBK1-IRF3 interaction. Interacts with host STAT2; this interaction blocks the nuclear translocation and activation of host STAT2. Interacts with host TNIP2.

The protein resides in the host cytoplasm. In terms of biological role, plays a role in the inhibition of host RLR-induced interferon-beta activation by inhibiting the phosphorylation of TANK-binding kinase 1/TBK1, thereby blocking IRF3 activation and preventing the establishment of an antiviral state. Also blocks IFN-triggered nuclear translocation and activation of host STAT2. The chain is Non-structural protein NS-S (NSS) from Alces americanus (American moose).